We begin with the raw amino-acid sequence, 278 residues long: Putative pyruvate, phosphate dikinase regulatory protein (278 aa).

149–156 lines the ADP pocket; it reads GVSRSSKT.

The protein belongs to the pyruvate, phosphate/water dikinase regulatory protein family. PDRP subfamily.

The enzyme catalyses N(tele)-phospho-L-histidyl/L-threonyl-[pyruvate, phosphate dikinase] + ADP = N(tele)-phospho-L-histidyl/O-phospho-L-threonyl-[pyruvate, phosphate dikinase] + AMP + H(+). The catalysed reaction is N(tele)-phospho-L-histidyl/O-phospho-L-threonyl-[pyruvate, phosphate dikinase] + phosphate + H(+) = N(tele)-phospho-L-histidyl/L-threonyl-[pyruvate, phosphate dikinase] + diphosphate. Its function is as follows. Bifunctional serine/threonine kinase and phosphorylase involved in the regulation of the pyruvate, phosphate dikinase (PPDK) by catalyzing its phosphorylation/dephosphorylation. In Erythrobacter litoralis (strain HTCC2594), this protein is Putative pyruvate, phosphate dikinase regulatory protein.